Here is a 320-residue protein sequence, read N- to C-terminus: Transaldolase (320 aa).

Lys-126 serves as the catalytic Schiff-base intermediate with substrate.

This sequence belongs to the transaldolase family. Type 1 subfamily. In terms of assembly, homodimer.

It localises to the cytoplasm. It catalyses the reaction D-sedoheptulose 7-phosphate + D-glyceraldehyde 3-phosphate = D-erythrose 4-phosphate + beta-D-fructose 6-phosphate. Its pathway is carbohydrate degradation; pentose phosphate pathway; D-glyceraldehyde 3-phosphate and beta-D-fructose 6-phosphate from D-ribose 5-phosphate and D-xylulose 5-phosphate (non-oxidative stage): step 2/3. Functionally, transaldolase is important for the balance of metabolites in the pentose-phosphate pathway. This chain is Transaldolase, found in Bordetella bronchiseptica (strain ATCC BAA-588 / NCTC 13252 / RB50) (Alcaligenes bronchisepticus).